Reading from the N-terminus, the 123-residue chain is Large ribosomal subunit protein bL12 (123 aa).

The protein belongs to the bacterial ribosomal protein bL12 family. In terms of assembly, homodimer. Part of the ribosomal stalk of the 50S ribosomal subunit. Forms a multimeric L10(L12)X complex, where L10 forms an elongated spine to which 2 to 4 L12 dimers bind in a sequential fashion. Binds GTP-bound translation factors.

Its function is as follows. Forms part of the ribosomal stalk which helps the ribosome interact with GTP-bound translation factors. Is thus essential for accurate translation. The chain is Large ribosomal subunit protein bL12 from Bartonella quintana (strain Toulouse) (Rochalimaea quintana).